We begin with the raw amino-acid sequence, 726 residues long: Catalase-peroxidase (726 aa).

Residues 90 to 213 (WHAAGTYRIG…LAAVQMGLIY (124 aa)) constitute a cross-link (tryptophyl-tyrosyl-methioninium (Trp-Tyr) (with M-239)). Catalysis depends on histidine 91, which acts as the Proton acceptor. Residues 213–239 (YVNPEGPNGKPDPAAAARDIRETFARM) constitute a cross-link (tryptophyl-tyrosyl-methioninium (Tyr-Met) (with W-90)). Histidine 254 serves as a coordination point for heme b. The interval 338 to 359 (TPKGGAGAGTVPDAHDPSKRHA) is disordered.

Belongs to the peroxidase family. Peroxidase/catalase subfamily. As to quaternary structure, homodimer or homotetramer. Requires heme b as cofactor. In terms of processing, formation of the three residue Trp-Tyr-Met cross-link is important for the catalase, but not the peroxidase activity of the enzyme.

It catalyses the reaction H2O2 + AH2 = A + 2 H2O. The catalysed reaction is 2 H2O2 = O2 + 2 H2O. Bifunctional enzyme with both catalase and broad-spectrum peroxidase activity. The sequence is that of Catalase-peroxidase from Bradyrhizobium sp. (strain ORS 278).